The following is a 322-amino-acid chain: Sideroflexin-1 (322 aa).

Position 2 is an N-acetylserine (S2). Residues 2 to 102 (SGELPPNINI…MSAQVPMNMT (101 aa)) are Mitochondrial matrix-facing. The chain crosses the membrane as a helical span at residues 103 to 120 (ITGCMMTFYRTTPAVLFW). Residues 121 to 146 (QWINQSFNAVVNYTNRSGDAPLTVNE) lie on the Mitochondrial intermembrane side of the membrane. Residues 147-167 (LGTAYVSATTGAVATALGLNA) traverse the membrane as a helical segment. The Mitochondrial matrix segment spans residues 168–174 (LTKHVSP). Residues 175–195 (LIGRFVPFAAVAAANCINIPL) form a helical membrane-spanning segment. At 196–228 (MRQRELKVGIPVTDENGNRLGESANAAKQAITQ) the chain is on the mitochondrial intermembrane side. Residues 229 to 249 (VVVSRILMAAPGMAIPPFIMN) traverse the membrane as a helical segment. The Mitochondrial matrix portion of the chain corresponds to 250–266 (TLEKKAFLKRFPWMSAP). Residues 267–287 (IQVGLVGFCLVFATPLCCALF) traverse the membrane as a helical segment. The Mitochondrial intermembrane portion of the chain corresponds to 288-322 (PQKSSMSVTSLEAELQAKIQESHPELRRVYFNKGL).

This sequence belongs to the sideroflexin family. In terms of tissue distribution, highly expressed in tissues with high one-carbon metabolism activity, such as blood, liver and kidney.

It localises to the mitochondrion inner membrane. The catalysed reaction is L-serine(in) = L-serine(out). It catalyses the reaction L-alanine(in) = L-alanine(out). It carries out the reaction L-cysteine(in) = L-cysteine(out). Functionally, amino acid transporter importing serine, an essential substrate of the mitochondrial branch of the one-carbon pathway, into mitochondria. Mitochondrial serine is then converted to glycine and formate, which exits to the cytosol where it is used to generate the charged folates that serve as one-carbon donors. May also transport other amino acids including alanine and cysteine. The protein is Sideroflexin-1 of Homo sapiens (Human).